Consider the following 306-residue polypeptide: GTPase IMAP family member 1 (306 aa).

The tract at residues 1-21 is disordered; it reads MGGRKMATDEENVYGLEENAQ. The Cytoplasmic segment spans residues 1–272; sequence MGGRKMATDE…RLWKWLKSPR (272 aa). Positions 25–229 constitute an AIG1-type G domain; that stretch reads ESTRRLILVG…YSNEVYELAQ (205 aa). The segment at 34 to 41 is G1; sequence GRTGAGKS. GTP contacts are provided by residues 34–42 and Ser55; that span reads GRTGAGKSA. The G2 stretch occupies residues 61 to 65; it reads SVTRA. Positions 82–85 are G3; it reads DTPD. A G4 region spans residues 152–155; that stretch reads TRKE. GTP contacts are provided by residues 153–155 and Asn190; that span reads RKE. The G5 stretch occupies residues 189–191; it reads DNR. A helical; Anchor for type IV membrane protein transmembrane segment spans residues 273-292; it reads SWRLGLALLLGGALLFWVLL. Topologically, residues 293–306 are lumenal; it reads HRRWSEAVAEVGPD.

Belongs to the TRAFAC class TrmE-Era-EngA-EngB-Septin-like GTPase superfamily. AIG1/Toc34/Toc159-like paraseptin GTPase family. IAN subfamily. As to expression, predominantly expressed in the spleen and to a lesser extent in the lymph nodes. Detected in T-cells.

The protein localises to the endoplasmic reticulum membrane. It is found in the golgi apparatus membrane. Functionally, may regulate lymphocyte survival. Required for normal levels of mature T-lymphocytes and mature B-cells. This Homo sapiens (Human) protein is GTPase IMAP family member 1 (GIMAP1).